The sequence spans 368 residues: Phosphate acyltransferase (368 aa).

The disordered stretch occupies residues 338 to 368; the sequence is GDGGHDAGGAGTASPAPGHHAEPSAAQSSKA.

Belongs to the PlsX family. Homodimer. Probably interacts with PlsY.

It is found in the cytoplasm. The enzyme catalyses a fatty acyl-[ACP] + phosphate = an acyl phosphate + holo-[ACP]. It functions in the pathway lipid metabolism; phospholipid metabolism. Functionally, catalyzes the reversible formation of acyl-phosphate (acyl-PO(4)) from acyl-[acyl-carrier-protein] (acyl-ACP). This enzyme utilizes acyl-ACP as fatty acyl donor, but not acyl-CoA. In Burkholderia ambifaria (strain MC40-6), this protein is Phosphate acyltransferase.